Here is a 103-residue protein sequence, read N- to C-terminus: Co-chaperonin GroES (103 aa).

This sequence belongs to the GroES chaperonin family. In terms of assembly, heptamer of 7 subunits arranged in a ring. Interacts with the chaperonin GroEL.

Its subcellular location is the cytoplasm. Its function is as follows. Together with the chaperonin GroEL, plays an essential role in assisting protein folding. The GroEL-GroES system forms a nano-cage that allows encapsulation of the non-native substrate proteins and provides a physical environment optimized to promote and accelerate protein folding. GroES binds to the apical surface of the GroEL ring, thereby capping the opening of the GroEL channel. This Synechococcus sp. (strain CC9605) protein is Co-chaperonin GroES.